The following is a 412-amino-acid chain: Serine hydroxymethyltransferase (412 aa).

(6S)-5,6,7,8-tetrahydrofolate-binding positions include Leu120 and 124–126; that span reads GHL. At Lys229 the chain carries N6-(pyridoxal phosphate)lysine. 352–354 serves as a coordination point for (6S)-5,6,7,8-tetrahydrofolate; the sequence is SPF.

It belongs to the SHMT family. As to quaternary structure, homodimer. Pyridoxal 5'-phosphate is required as a cofactor.

The protein localises to the cytoplasm. It catalyses the reaction (6R)-5,10-methylene-5,6,7,8-tetrahydrofolate + glycine + H2O = (6S)-5,6,7,8-tetrahydrofolate + L-serine. The protein operates within one-carbon metabolism; tetrahydrofolate interconversion. It participates in amino-acid biosynthesis; glycine biosynthesis; glycine from L-serine: step 1/1. In terms of biological role, catalyzes the reversible interconversion of serine and glycine with tetrahydrofolate (THF) serving as the one-carbon carrier. This reaction serves as the major source of one-carbon groups required for the biosynthesis of purines, thymidylate, methionine, and other important biomolecules. Also exhibits THF-independent aldolase activity toward beta-hydroxyamino acids, producing glycine and aldehydes, via a retro-aldol mechanism. The chain is Serine hydroxymethyltransferase from Acetivibrio thermocellus (strain ATCC 27405 / DSM 1237 / JCM 9322 / NBRC 103400 / NCIMB 10682 / NRRL B-4536 / VPI 7372) (Clostridium thermocellum).